The sequence spans 80 residues: Polcalcin Cyn d 7 (80 aa).

2 EF-hand domains span residues 2–37 and 40–72; these read ADTG…LGST and DEVQ…NPGL. The Ca(2+) site is built by aspartate 15, asparagine 17, aspartate 19, lysine 21, glutamate 26, aspartate 50, aspartate 52, aspartate 54, and glutamate 61.

The chain is Polcalcin Cyn d 7 from Cynodon dactylon (Bermuda grass).